The chain runs to 231 residues: Biosynthetic peptidoglycan transglycosylase (231 aa).

The helical transmembrane segment at 7 to 27 (LLFWLILVPILLVLLMQLYFF) threads the bilayer.

The protein belongs to the glycosyltransferase 51 family.

It is found in the cell inner membrane. The enzyme catalyses [GlcNAc-(1-&gt;4)-Mur2Ac(oyl-L-Ala-gamma-D-Glu-L-Lys-D-Ala-D-Ala)](n)-di-trans,octa-cis-undecaprenyl diphosphate + beta-D-GlcNAc-(1-&gt;4)-Mur2Ac(oyl-L-Ala-gamma-D-Glu-L-Lys-D-Ala-D-Ala)-di-trans,octa-cis-undecaprenyl diphosphate = [GlcNAc-(1-&gt;4)-Mur2Ac(oyl-L-Ala-gamma-D-Glu-L-Lys-D-Ala-D-Ala)](n+1)-di-trans,octa-cis-undecaprenyl diphosphate + di-trans,octa-cis-undecaprenyl diphosphate + H(+). It functions in the pathway cell wall biogenesis; peptidoglycan biosynthesis. Functionally, peptidoglycan polymerase that catalyzes glycan chain elongation from lipid-linked precursors. This chain is Biosynthetic peptidoglycan transglycosylase, found in Herminiimonas arsenicoxydans.